A 644-amino-acid polypeptide reads, in one-letter code: Polyglycine hydrolase (644 aa).

A signal peptide spans 1-23 (MYTSRSLFSTLASCLSLATLVAS). 5 N-linked (GlcNAc...) asparagine glycosylation sites follow: Asn-100, Asn-144, Asn-159, Asn-244, and Asn-340. Cys-149 and Cys-183 are oxidised to a cystine. Residue Ser-369 is part of the active site. 4 N-linked (GlcNAc...) asparagine glycosylation sites follow: Asn-389, Asn-410, Asn-443, and Asn-486.

Belongs to the peptidase S12 family.

The protein localises to the secreted. The catalysed reaction is a glycyl-glycyl-[protein] + H2O = N-terminal glycyl-[protein] + [protein]-C-terminal glycine. Not inhibited by phenylmethylsulfonyl fluoride (PMSF; serine peptidase class S1 inhibitor), clavulanic acid (beta-lactamase inhibitor) or ampicillin (penicillin-binding protein (PBP) inhibitor). Its function is as follows. Serine-type endopeptidase that cleaves Gly-Gly bonds in the polyglycine linker of host plant class IV chitinases to disrupt their chitin-binding, and thereby plays a role in lowering the defense responses of the host to the fungus. Degrades Z.mays Endochitinase A (CHIA). Has low proteolytic activity on Z.mays Endochitinase B (CHIB). This Cochliobolus carbonum (strain 26-R-13) (Maize leaf spot fungus) protein is Polyglycine hydrolase.